A 167-amino-acid polypeptide reads, in one-letter code: MPRSQRNDNFIDKTFTVIADILLKVLPTSNREKQAFTYYREGMSAQSEGEYAEALQNYYEAMRLEVDAYDRSYIFYNIGLIHTSNGEHARALEYYYQALERNPSLPQALNNIAVIYHYRGEQAIENGQAEISKMLFDKAADYWKEAIRLAPTNYIEAQNWLKMTARE.

TPR repeat units lie at residues 35-68 (AFTY…EVDA), 72-105 (SYIF…NPSL), and 120-153 (GEQA…APTN).

The protein belongs to the Ycf3 family.

It is found in the plastid. The protein resides in the chloroplast thylakoid membrane. Its function is as follows. Essential for the assembly of the photosystem I (PSI) complex. May act as a chaperone-like factor to guide the assembly of the PSI subunits. This Pleurastrum terricola (Filamentous green alga) protein is Photosystem I assembly protein Ycf3.